A 188-amino-acid chain; its full sequence is Putative manganese efflux pump MntP (188 aa).

6 helical membrane-spanning segments follow: residues 3-23, 35-55, 63-83, 104-126, 140-160, and 167-187; these read FYAL…VALA, IAAT…AGWV, FISE…GLKM, WMTV…GLAF, MATT…GVLF, and AGGL…LGLI.

Belongs to the MntP (TC 9.B.29) family.

It is found in the cell inner membrane. Functionally, probably functions as a manganese efflux pump. The protein is Putative manganese efflux pump MntP of Neisseria meningitidis serogroup B (strain ATCC BAA-335 / MC58).